Here is a 402-residue protein sequence, read N- to C-terminus: MNATDIERCRKRIIQYIWDPEPKNDEEPGSPIWCLGTRYPPQCVEETADESRNPDHGQQQNTNTSAPGWPEAFLLDFESKIWMTYRSNFPPIPKDAGQEGSLSLTLGVRLRSQLIDAQGFTSDTGWGCMIRSGQSLLANSMAILLLGRDWRRGERLEEEGKLLSLFADSPHAPFSIHSFVKHGADFCGKHPGEWFGPTATARCIQGLAARYDQSNLQVYIADDNSDVHQDKFMSVSRDEKGTVRPTLILLGLRLGIDRITAVYWNGLKAVLQLPQSVGIAGGRPSASHYFVAVQGSHFFYLDPHNTRPALRYSESGTYTEDEVNTYHTRRLRRLNIQDMDPSMLIGFLIRDEDDWEDWKARIMSLEGKPIITILSESDAASWKGRREALDEVEAFDDLDVAL.

The segment at 46–68 (ETADESRNPDHGQQQNTNTSAPG) is disordered. Positions 56–66 (HGQQQNTNTSA) are enriched in polar residues. The active-site Nucleophile is the Cys128. Active-site residues include Asp302 and His304.

Belongs to the peptidase C54 family.

The protein localises to the cytoplasm. It localises to the nucleus. It is found in the preautophagosomal structure. It carries out the reaction [protein]-C-terminal L-amino acid-glycyl-phosphatidylethanolamide + H2O = [protein]-C-terminal L-amino acid-glycine + a 1,2-diacyl-sn-glycero-3-phosphoethanolamine. Its function is as follows. Cysteine protease that plays a key role in cytoplasm to vacuole transport (Cvt) and autophagy by mediating both proteolytic activation and delipidation of ATG8. Required for selective autophagic degradation of the nucleus (nucleophagy) as well as for mitophagy which contributes to regulate mitochondrial quantity and quality by eliminating the mitochondria to a basal level to fulfill cellular energy requirements and preventing excess ROS production. The protease activity is required for proteolytic activation of ATG8: cleaves the C-terminal amino acid of ATG8 to reveal a C-terminal glycine. ATG8 ubiquitin-like activity requires the exposure of the glycine at the C-terminus for its conjugation to phosphatidylethanolamine (PE) and its insertion to membranes, which is necessary for autophagy. The ATG8-PE conjugate mediates tethering between adjacent membranes and stimulates membrane hemifusion, leading to expansion of the autophagosomal membrane during autophagy. In addition to the protease activity, also catalyzes deconjugation of PE-conjugated forms of ATG8 during macroautophagy: ATG8 delipidation is required to release the protein from membranes, which facilitates multiple events during macroautophagy, and especially for efficient autophagosome biogenesis, the assembly of ATG9-containing tubulovesicular clusters into phagophores/autophagosomes, and for the disassembly of PAS-associated ATG components. ATG8 delipidation by ATG4 also recycles ATG8-PE generated on inappropriate membranes to maintain a reservoir of unlipidated ATG8 that is required for autophagosome formation at the PAS. The chain is Cysteine protease atg4 (atg4) from Emericella nidulans (strain FGSC A4 / ATCC 38163 / CBS 112.46 / NRRL 194 / M139) (Aspergillus nidulans).